Reading from the N-terminus, the 73-residue chain is UPF0154 protein MG335.1 (73 aa).

The helical transmembrane segment at 6–26 (LALGLGIPLSLLVGMILGYFI) threads the bilayer.

This sequence belongs to the UPF0154 family.

The protein localises to the membrane. The sequence is that of UPF0154 protein MG335.1 from Mycoplasma genitalium (strain ATCC 33530 / DSM 19775 / NCTC 10195 / G37) (Mycoplasmoides genitalium).